The primary structure comprises 79 residues: Morintide mO2 (79 aa).

Residues 1–20 (MAKLSFLSLFLLCLVATATA) form the signal peptide. Positions 21-63 (QNCGRQAGNRACANGLCCSQYGFCGSTSEYCSRANGCQSNCRG) constitute a Chitin-binding type-1 domain. 4 cysteine pairs are disulfide-bonded: Cys23–Cys38, Cys32–Cys44, Cys37–Cys51, and Cys57–Cys61. Residues 64–79 (GGGAGGAGGGAGGGSP) constitute a propeptide that is removed on maturation.

In terms of tissue distribution, leaves (at protein level).

In terms of biological role, chitin-binding protein which functions in defense against chitin-containing fungal pathogens. The polypeptide is Morintide mO2 (Moringa oleifera (Horseradish tree)).